A 366-amino-acid chain; its full sequence is Ribosomal RNA large subunit methyltransferase M (366 aa).

S-adenosyl-L-methionine-binding positions include Ser-188, 221–224 (CPGG), Asp-240, Asp-260, and Asp-277. The active-site Proton acceptor is Lys-306.

The protein belongs to the class I-like SAM-binding methyltransferase superfamily. RNA methyltransferase RlmE family. RlmM subfamily. As to quaternary structure, monomer.

The protein resides in the cytoplasm. The enzyme catalyses cytidine(2498) in 23S rRNA + S-adenosyl-L-methionine = 2'-O-methylcytidine(2498) in 23S rRNA + S-adenosyl-L-homocysteine + H(+). Its function is as follows. Catalyzes the 2'-O-methylation at nucleotide C2498 in 23S rRNA. The sequence is that of Ribosomal RNA large subunit methyltransferase M from Salmonella paratyphi C (strain RKS4594).